Consider the following 146-residue polypeptide: Lysozyme C-2 (146 aa).

Residues 1 to 18 form the signal peptide; the sequence is MKTLLVLALLLLSVSVQA. The region spanning 19–146 is the C-type lysozyme domain; sequence KVYDRCEFAR…VSQYIRGCKL (128 aa). 4 disulfide bridges follow: Cys-24-Cys-144, Cys-48-Cys-132, Cys-81-Cys-97, and Cys-93-Cys-111. Residues Glu-53 and Asp-69 contribute to the active site.

It belongs to the glycosyl hydrolase 22 family. As to quaternary structure, monomer.

Its subcellular location is the secreted. It carries out the reaction Hydrolysis of (1-&gt;4)-beta-linkages between N-acetylmuramic acid and N-acetyl-D-glucosamine residues in a peptidoglycan and between N-acetyl-D-glucosamine residues in chitodextrins.. In terms of biological role, lysozymes have primarily a bacteriolytic function; those in tissues and body fluids are associated with the monocyte-macrophage system and enhance the activity of immunoagents. The protein is Lysozyme C-2 of Sus scrofa (Pig).